Consider the following 362-residue polypeptide: Prostaglandin F2-alpha receptor (362 aa).

Topologically, residues 1 to 31 (MSTNNSVQPVSPASELLSNTTCQLEEDLSIS) are extracellular. N-linked (GlcNAc...) asparagine glycosylation is found at N4 and N19. A helical membrane pass occupies residues 32–54 (FSIIFMTVGILSNSLAIAILMKA). Residues 55–69 (YQRFRQKYKSSFLLL) lie on the Cytoplasmic side of the membrane. Residues 70 to 90 (ASALVITDFFGHLINGTIAVF) traverse the membrane as a helical segment. Residues 91–109 (VYASDKDWIYFDKSNILCS) lie on the Extracellular side of the membrane. Residues C108 and C186 are joined by a disulfide bond. A helical membrane pass occupies residues 110–131 (IFGICMVFSGLCPLFLGSLMAI). Topologically, residues 132–152 (ERCIGVTKPIFHSTKITTKHV) are cytoplasmic. The chain crosses the membrane as a helical span at residues 153-175 (KMMLSGVCFFAVFVALLPILGHR). The Extracellular portion of the chain corresponds to 176–198 (DYKIQASRTWCFYKTDQIKDWED). A helical transmembrane segment spans residues 199–224 (RFYLLLFAFLGLLALGISFVCNAITG). The Cytoplasmic portion of the chain corresponds to 225-250 (ISLLKVKFRSQQHRQGRSHHFEMVIQ). Residues 251–267 (LLGIMCVSCICWSPFLV) form a helical membrane-spanning segment. The Extracellular segment spans residues 268–285 (TMASIGMNIQDFKDSCER). Residues 286–307 (TLFTLRMATWNQILDPWVYILL) traverse the membrane as a helical segment. The Cytoplasmic portion of the chain corresponds to 308–362 (RKAVLRNLYVCTRRCCGVHVISLHVWELSSIKNSLKVAAISDLPVTEKVTQQTST).

Belongs to the G-protein coupled receptor 1 family.

Its subcellular location is the cell membrane. Functionally, receptor for prostaglandin F2-alpha (PGF2-alpha). The activity of this receptor is mediated by G proteins which activate a phosphatidylinositol-calcium second messenger system. Initiates luteolysis in the corpus luteum. The protein is Prostaglandin F2-alpha receptor (PTGFR) of Ovis aries (Sheep).